Consider the following 194-residue polypeptide: tRNA (guanine-N(1)-)-methyltransferase (194 aa).

Residues glycine 78 and 97–102 contribute to the S-adenosyl-L-methionine site; that span reads IGDYVL.

This sequence belongs to the RNA methyltransferase TrmD family. In terms of assembly, homodimer.

The protein resides in the cytoplasm. The enzyme catalyses guanosine(37) in tRNA + S-adenosyl-L-methionine = N(1)-methylguanosine(37) in tRNA + S-adenosyl-L-homocysteine + H(+). Specifically methylates guanosine-37 in various tRNAs. The polypeptide is tRNA (guanine-N(1)-)-methyltransferase (Mycoplasma mobile (strain ATCC 43663 / 163K / NCTC 11711) (Mesomycoplasma mobile)).